Reading from the N-terminus, the 277-residue chain is Large ribosomal subunit protein uL2 (277 aa).

A disordered region spans residues 223–277; that stretch reads VAMNPVDHPHGGGEGRTSTGRHPVTPWGKRTLGKKTRKRKASDKYIIRSRRARKR. Residues 253 to 277 are compositionally biased toward basic residues; sequence TLGKKTRKRKASDKYIIRSRRARKR.

It belongs to the universal ribosomal protein uL2 family. Part of the 50S ribosomal subunit. Forms a bridge to the 30S subunit in the 70S ribosome.

One of the primary rRNA binding proteins. Required for association of the 30S and 50S subunits to form the 70S ribosome, for tRNA binding and peptide bond formation. It has been suggested to have peptidyltransferase activity; this is somewhat controversial. Makes several contacts with the 16S rRNA in the 70S ribosome. The protein is Large ribosomal subunit protein uL2 of Halothermothrix orenii (strain H 168 / OCM 544 / DSM 9562).